Reading from the N-terminus, the 675-residue chain is Rho guanine nucleotide exchange factor 37 (675 aa).

Residues 1-26 (MAKHGADEPSSRSGSPDREGRASEDR) are disordered. The DH domain occupies 30-213 (HQRLAVRELI…QDVNTNINEY (184 aa)). Residues 254-455 (LKQEAGLIPR…LPHHHVPEPA (202 aa)) form the BAR domain. SH3 domains follow at residues 506-569 (GPGK…LYHV) and 602-665 (PTMN…RARS).

May act as a guanine nucleotide exchange factor (GEF). In Homo sapiens (Human), this protein is Rho guanine nucleotide exchange factor 37 (ARHGEF37).